Reading from the N-terminus, the 323-residue chain is Synaptonemal complex central element protein 1 (323 aa).

Over residues 1–10 (MAGRPGSSNA) the composition is skewed to polar residues. 2 disordered regions span residues 1–31 (MAGRPGSSNAEAAGAVGPTDEARGQAESSQK) and 294–323 (KQEEEAGLGEAANPKPLGVSEEKDQEPSTK). Basic and acidic residues-rich tracts occupy residues 20-31 (DEARGQAESSQK) and 313-323 (SEEKDQEPSTK). Positions 25-290 (QAESSQKIED…EKLGVQVLAQ (266 aa)) form a coiled coil.

It belongs to the SYCE family. Homodimer. Found in a complex with SYCP1 and SYCE2. Interacts with SYCP1, SYCE2 and SYCE3. Interacts with SIX6OS1.

It is found in the nucleus. It localises to the chromosome. Major component of the transverse central element of synaptonemal complexes (SCS), formed between homologous chromosomes during meiotic prophase. Requires SYCP1 in order to be incorporated into the central element. May have a role in the synaptonemal complex assembly, stabilization and recombination. This Bos taurus (Bovine) protein is Synaptonemal complex central element protein 1 (SYCE1).